The following is a 485-amino-acid chain: NADH-quinone oxidoreductase subunit N (485 aa).

The next 14 membrane-spanning stretches (helical) occupy residues 8 to 28 (LIALLPLLIVGLTVVVVMLSI), 35 to 55 (FLNATLSVLGLNAALVSLWFV), 75 to 95 (LYTGLVLLASLATCTFAYPWL), 105 to 125 (FYLLVLIAALGGILLAGANHL), 127 to 147 (ALFLGIELISLPLFGLVGYAF), 159 to 179 (YTILSAAASSFLLFGMALVYA), 203 to 223 (LLAGLGLMIVGLGFKLSLVPF), 235 to 255 (PAPVSTFLATASKIAIFGVVM), 271 to 291 (VVLGLIAFASIIFGNLMALSQ), 297 to 317 (LLGYSSISHLGYLLVALIALQ), 326 to 346 (VGVYLAGYLFSSLGAFGVVSL), 374 to 394 (AVMTVMMLSLAGIPMTLGFIG), 408 to 430 (WWLVAAVVVGSAIGLYYYLRVAV), and 455 to 475 (IVVLISALLVLVLGIWPQPLI).

Belongs to the complex I subunit 2 family. NDH-1 is composed of 13 different subunits. Subunits NuoA, H, J, K, L, M, N constitute the membrane sector of the complex.

Its subcellular location is the cell inner membrane. The enzyme catalyses a quinone + NADH + 5 H(+)(in) = a quinol + NAD(+) + 4 H(+)(out). In terms of biological role, NDH-1 shuttles electrons from NADH, via FMN and iron-sulfur (Fe-S) centers, to quinones in the respiratory chain. The immediate electron acceptor for the enzyme in this species is believed to be ubiquinone. Couples the redox reaction to proton translocation (for every two electrons transferred, four hydrogen ions are translocated across the cytoplasmic membrane), and thus conserves the redox energy in a proton gradient. This Klebsiella pneumoniae subsp. pneumoniae (strain ATCC 700721 / MGH 78578) protein is NADH-quinone oxidoreductase subunit N.